We begin with the raw amino-acid sequence, 192 residues long: Pyridoxal 5'-phosphate synthase subunit PdxT (192 aa).

46–48 (GES) contributes to the L-glutamine binding site. The active-site Nucleophile is the Cys78. Residues Arg106 and 135–136 (IR) contribute to the L-glutamine site. Catalysis depends on charge relay system residues His171 and Glu173.

This sequence belongs to the glutaminase PdxT/SNO family. In terms of assembly, in the presence of PdxS, forms a dodecamer of heterodimers. Only shows activity in the heterodimer.

The enzyme catalyses aldehydo-D-ribose 5-phosphate + D-glyceraldehyde 3-phosphate + L-glutamine = pyridoxal 5'-phosphate + L-glutamate + phosphate + 3 H2O + H(+). It catalyses the reaction L-glutamine + H2O = L-glutamate + NH4(+). It functions in the pathway cofactor biosynthesis; pyridoxal 5'-phosphate biosynthesis. In terms of biological role, catalyzes the hydrolysis of glutamine to glutamate and ammonia as part of the biosynthesis of pyridoxal 5'-phosphate. The resulting ammonia molecule is channeled to the active site of PdxS. The chain is Pyridoxal 5'-phosphate synthase subunit PdxT from Kosmotoga olearia (strain ATCC BAA-1733 / DSM 21960 / TBF 19.5.1).